The following is a 485-amino-acid chain: Glutamyl-tRNA(Gln) amidotransferase subunit A (485 aa).

Residues K79 and S154 each act as charge relay system in the active site. Residue S178 is the Acyl-ester intermediate of the active site.

The protein belongs to the amidase family. GatA subfamily. As to quaternary structure, heterotrimer of A, B and C subunits.

The catalysed reaction is L-glutamyl-tRNA(Gln) + L-glutamine + ATP + H2O = L-glutaminyl-tRNA(Gln) + L-glutamate + ADP + phosphate + H(+). In terms of biological role, allows the formation of correctly charged Gln-tRNA(Gln) through the transamidation of misacylated Glu-tRNA(Gln) in organisms which lack glutaminyl-tRNA synthetase. The reaction takes place in the presence of glutamine and ATP through an activated gamma-phospho-Glu-tRNA(Gln). This chain is Glutamyl-tRNA(Gln) amidotransferase subunit A, found in Clostridium botulinum (strain Langeland / NCTC 10281 / Type F).